Reading from the N-terminus, the 152-residue chain is D-aminoacyl-tRNA deacylase (152 aa).

Positions 137–138 (GP) match the Gly-cisPro motif, important for rejection of L-amino acids motif.

It belongs to the DTD family. In terms of assembly, homodimer.

The protein localises to the cytoplasm. It carries out the reaction glycyl-tRNA(Ala) + H2O = tRNA(Ala) + glycine + H(+). It catalyses the reaction a D-aminoacyl-tRNA + H2O = a tRNA + a D-alpha-amino acid + H(+). Its function is as follows. An aminoacyl-tRNA editing enzyme that deacylates mischarged D-aminoacyl-tRNAs. Also deacylates mischarged glycyl-tRNA(Ala), protecting cells against glycine mischarging by AlaRS. Acts via tRNA-based rather than protein-based catalysis; rejects L-amino acids rather than detecting D-amino acids in the active site. By recycling D-aminoacyl-tRNA to D-amino acids and free tRNA molecules, this enzyme counteracts the toxicity associated with the formation of D-aminoacyl-tRNA entities in vivo and helps enforce protein L-homochirality. This chain is D-aminoacyl-tRNA deacylase, found in Methylibium petroleiphilum (strain ATCC BAA-1232 / LMG 22953 / PM1).